The sequence spans 320 residues: Uridine phosphorylase 2 (320 aa).

Residues glycine 66, arginine 100, and 144-147 (RIGT) contribute to the phosphate site. An intrachain disulfide couples cysteine 95 to cysteine 102. Uridine is bound by residues 148 to 149 (SG) and 223 to 225 (QGR).

This sequence belongs to the PNP/UDP phosphorylase family. In terms of assembly, homodimer. In terms of tissue distribution, liver specific.

The enzyme catalyses uridine + phosphate = alpha-D-ribose 1-phosphate + uracil. The catalysed reaction is 2'-deoxyuridine + phosphate = 2-deoxy-alpha-D-ribose 1-phosphate + uracil. It functions in the pathway pyrimidine metabolism; UMP biosynthesis via salvage pathway; uracil from uridine (phosphorylase route): step 1/1. With respect to regulation, a conditional disulfide bridge can form within the protein that dislocates a critical phosphate-coordinating arginine Arg-100 away from the active site, disabling the enzyme. In terms of biological role, catalyzes the reversible phosphorylytic cleavage of uridine to uracil and ribose-1-phosphate which can then be utilized as carbon and energy sources or in the rescue of pyrimidine bases for nucleotide synthesis. Shows broad substrate specificity and can also accept deoxyuridine and other analogous compounds. This is Uridine phosphorylase 2 from Mus musculus (Mouse).